Reading from the N-terminus, the 446-residue chain is 3-phosphoshikimate 1-carboxyvinyltransferase (446 aa).

3-phosphoshikimate contacts are provided by Lys-30, Ser-31, and Arg-35. Residue Lys-30 participates in phosphoenolpyruvate binding. Phosphoenolpyruvate-binding residues include Gly-112 and Arg-140. 3-phosphoshikimate is bound by residues Ser-186, Ser-187, Gln-188, Ser-215, Glu-334, and His-361. Gln-188 is a phosphoenolpyruvate binding site. The active-site Proton acceptor is Glu-334. The phosphoenolpyruvate site is built by Arg-365, Arg-406, and Lys-431.

It belongs to the EPSP synthase family. In terms of assembly, monomer.

The protein resides in the cytoplasm. The enzyme catalyses 3-phosphoshikimate + phosphoenolpyruvate = 5-O-(1-carboxyvinyl)-3-phosphoshikimate + phosphate. It functions in the pathway metabolic intermediate biosynthesis; chorismate biosynthesis; chorismate from D-erythrose 4-phosphate and phosphoenolpyruvate: step 6/7. Its function is as follows. Catalyzes the transfer of the enolpyruvyl moiety of phosphoenolpyruvate (PEP) to the 5-hydroxyl of shikimate-3-phosphate (S3P) to produce enolpyruvyl shikimate-3-phosphate and inorganic phosphate. The polypeptide is 3-phosphoshikimate 1-carboxyvinyltransferase (Streptomyces avermitilis (strain ATCC 31267 / DSM 46492 / JCM 5070 / NBRC 14893 / NCIMB 12804 / NRRL 8165 / MA-4680)).